The following is a 356-amino-acid chain: Holliday junction branch migration complex subunit RuvB (356 aa).

Residues 13-197 (LPPARRMLSA…FGIVARLEFY (185 aa)) are large ATPase domain (RuvB-L). ATP is bound by residues leucine 36, arginine 37, glycine 78, lysine 81, threonine 82, threonine 83, 144–146 (EDY), arginine 187, tyrosine 197, and arginine 234. Residue threonine 82 participates in Mg(2+) binding. The tract at residues 198 to 268 (TPEELARIVK…IANRALAMLD (71 aa)) is small ATPAse domain (RuvB-S). The segment at 271-356 (PQGFDLMDRK…RGNAENLFEE (86 aa)) is head domain (RuvB-H). DNA-binding residues include arginine 326 and arginine 331.

Belongs to the RuvB family. In terms of assembly, homohexamer. Forms an RuvA(8)-RuvB(12)-Holliday junction (HJ) complex. HJ DNA is sandwiched between 2 RuvA tetramers; dsDNA enters through RuvA and exits via RuvB. An RuvB hexamer assembles on each DNA strand where it exits the tetramer. Each RuvB hexamer is contacted by two RuvA subunits (via domain III) on 2 adjacent RuvB subunits; this complex drives branch migration. In the full resolvosome a probable DNA-RuvA(4)-RuvB(12)-RuvC(2) complex forms which resolves the HJ.

The protein localises to the cytoplasm. It catalyses the reaction ATP + H2O = ADP + phosphate + H(+). The RuvA-RuvB-RuvC complex processes Holliday junction (HJ) DNA during genetic recombination and DNA repair, while the RuvA-RuvB complex plays an important role in the rescue of blocked DNA replication forks via replication fork reversal (RFR). RuvA specifically binds to HJ cruciform DNA, conferring on it an open structure. The RuvB hexamer acts as an ATP-dependent pump, pulling dsDNA into and through the RuvAB complex. RuvB forms 2 homohexamers on either side of HJ DNA bound by 1 or 2 RuvA tetramers; 4 subunits per hexamer contact DNA at a time. Coordinated motions by a converter formed by DNA-disengaged RuvB subunits stimulates ATP hydrolysis and nucleotide exchange. Immobilization of the converter enables RuvB to convert the ATP-contained energy into a lever motion, pulling 2 nucleotides of DNA out of the RuvA tetramer per ATP hydrolyzed, thus driving DNA branch migration. The RuvB motors rotate together with the DNA substrate, which together with the progressing nucleotide cycle form the mechanistic basis for DNA recombination by continuous HJ branch migration. Branch migration allows RuvC to scan DNA until it finds its consensus sequence, where it cleaves and resolves cruciform DNA. The polypeptide is Holliday junction branch migration complex subunit RuvB (Polaromonas naphthalenivorans (strain CJ2)).